A 225-amino-acid chain; its full sequence is Uracil phosphoribosyltransferase (225 aa).

36–40 (KGLVR) contacts GTP. 5-phospho-alpha-D-ribose 1-diphosphate-binding positions include Arg86, Arg111, and 145 to 153 (DPMLATGST). Uracil-binding positions include Ile210 and 215–217 (GDA). Asp216 contacts 5-phospho-alpha-D-ribose 1-diphosphate.

The protein belongs to the UPRTase family. The cofactor is Mg(2+).

The enzyme catalyses UMP + diphosphate = 5-phospho-alpha-D-ribose 1-diphosphate + uracil. It functions in the pathway pyrimidine metabolism; UMP biosynthesis via salvage pathway; UMP from uracil: step 1/1. Its activity is regulated as follows. Allosterically activated by GTP. Catalyzes the conversion of uracil and 5-phospho-alpha-D-ribose 1-diphosphate (PRPP) to UMP and diphosphate. The chain is Uracil phosphoribosyltransferase from Haloarcula marismortui (strain ATCC 43049 / DSM 3752 / JCM 8966 / VKM B-1809) (Halobacterium marismortui).